Consider the following 967-residue polypeptide: Kinesin heavy chain (967 aa).

Positions 8–326 (NIKVICRVRP…LLFGQRAKTI (319 aa)) constitute a Kinesin motor domain. 85–92 (GQTSSGKT) is a binding site for ATP. The interval 173-314 (VSSPEEVMEV…PASYNESETK (142 aa)) is microtubule-binding. Disordered regions lie at residues 387-411 (VPAESPATSTTSLAGGLIASMNEGD) and 923-967 (KPIR…ESKA). A coiled-coil region spans residues 392-861 (PATSTTSLAG…RDNADLRCEL (470 aa)). Residues 862 to 967 (PKLEKRLRAT…PIRMAPESKA (106 aa)) form a globular region. A compositionally biased stretch (polar residues) spans 949–958 (QNGPMITSTP).

Belongs to the TRAFAC class myosin-kinesin ATPase superfamily. Kinesin family. Kinesin subfamily. In terms of assembly, oligomer composed of two heavy chains and two light chains. Interacts with amyloid-beta precursor-like protein (via cytoplasmic domain).

It is found in the cytoplasm. The protein resides in the cytoskeleton. Its subcellular location is the cell projection. The protein localises to the axon. Functionally, kinesin is a microtubule-associated force-producing protein that may play a role in organelle transport. The protein is Kinesin heavy chain of Doryteuthis pealeii (Longfin inshore squid).